A 169-amino-acid chain; its full sequence is Major fimbrial subunit SMF-1 (169 aa).

Positions 1–11 are cleaved as a signal peptide; that stretch reads MLAAAPLAANA.

Belongs to the fimbrial protein family.

It localises to the fimbrium. In terms of biological role, involved in adherence to eukaryotic epithelial cells and abiotic surfaces. Mediates agglutination of animal red blood cells. The sequence is that of Major fimbrial subunit SMF-1 from Stenotrophomonas maltophilia (strain K279a).